A 245-amino-acid chain; its full sequence is Tetraspanin-6 (245 aa).

Over methionine 1–serine 19 the chain is Cytoplasmic. The helical transmembrane segment at valine 20–isoleucine 40 threads the bilayer. Residues tryptophan 41–asparagine 59 are Extracellular-facing. The chain crosses the membrane as a helical span at residues valine 60 to phenylalanine 80. Over alanine 81–tyrosine 93 the chain is Cytoplasmic. The helical transmembrane segment at alanine 94–phenylalanine 114 threads the bilayer. Residues arginine 115–glutamate 208 lie on the Extracellular side of the membrane. N-linked (GlcNAc...) asparagine glycosylation occurs at asparagine 134. The helical transmembrane segment at methionine 209–leucine 229 threads the bilayer. The Cytoplasmic portion of the chain corresponds to alanine 230 to valine 245.

This sequence belongs to the tetraspanin (TM4SF) family.

It is found in the membrane. This is Tetraspanin-6 (TSPAN6) from Bos taurus (Bovine).